A 740-amino-acid polypeptide reads, in one-letter code: Platelet endothelial cell adhesion molecule (740 aa).

An N-terminal signal peptide occupies residues 1–27 (MRLRWTQGGNMWLGVLLTLQLCSSLEG). The Extracellular portion of the chain corresponds to 28-602 (QENSFTINSI…VRVYLAPWKK (575 aa)). Ig-like C2-type domains are found at residues 35 to 126 (NSIH…YKVV), 145 to 223 (GGVV…DSVR), and 236 to 315 (PKFH…SKVS). N-linked (GlcNAc...) asparagine glycosylation is found at N52 and N84. 3 cysteine pairs are disulfide-bonded: C57–C109, C152–C206, and C256–C304. 8 N-linked (GlcNAc...) asparagine glycosylation sites follow: N284, N301, N320, N357, N372, N436, N456, and N552. 3 consecutive Ig-like C2-type domains span residues 328-404 (PKLK…VQIA), 425-494 (GQTI…KVLR), and 500-592 (PVEE…NILA). Intrachain disulfides connect C347–C387, C432–C477, and C524–C573. The chain crosses the membrane as a helical span at residues 603-621 (GLIAVVVIAVIIAVLLLGA). Over 622–740 (RFYFLKKSKA…SRTEGSLDGT (119 aa)) the chain is Cytoplasmic. 2 consecutive short sequence motifs (ITIM motif) follow at residues 690–695 (VEYTEV) and 713–718 (TVYSEI). Residues Y692 and Y715 each carry the phosphotyrosine; by FER modification. Positions 697-740 (VTSPEPHRGLGTKGTETVYSEIRKADPDLVENRYSRTEGSLDGT) are disordered. The tract at residues 711–731 (TETVYSEIRKADPDLVENRYS) is membrane-bound segment which detaches upon phosphorylation. The segment covering 717–732 (EIRKADPDLVENRYSR) has biased composition (basic and acidic residues). The tract at residues 723-740 (PDLVENRYSRTEGSLDGT) is may play a role in cytoprotective signaling. Phosphoserine is present on residues S731 and S736.

Trans-homodimer (via Ig-like C2-type 1 and Ig-like C2-type 2 domains); trans-homodimerization is required for cell-cell interaction. Forms a complex with BDKRB2 and GNAQ. Interacts with BDKRB2 and GNAQ. Interacts with PTPN11; Tyr-715 is critical for PTPN11 recruitment. Interacts with FER. Interacts with CD177; the interaction is Ca(2+)-dependent; the interaction is direct. Post-translationally, phosphorylated on Ser and Tyr residues by src kinases after cellular activation. Upon activation, phosphorylated on Ser-731 which probably initiates the dissociation of the membrane-interaction segment (residues 711-731) from the cell membrane allowing the sequential phosphorylation of Tyr-715 and Tyr-692. Constitutively phosphorylated on Ser-736 in resting platelets. Phosphorylated on tyrosine residues by FER and FES in response to FCER1 activation. In endothelial cells Fyn mediates mechanical-force (stretch or pull) induced tyrosine phosphorylation. In terms of processing, palmitoylation by ZDHHC21 is necessary for cell surface expression in endothelial cells and enrichment in membrane rafts.

Its subcellular location is the cell membrane. The protein localises to the membrane raft. It localises to the cell junction. Cell adhesion molecule which is required for leukocyte transendothelial migration (TEM) under most inflammatory conditions. Tyr-692 plays a critical role in TEM and is required for efficient trafficking of PECAM1 to and from the lateral border recycling compartment (LBRC) and is also essential for the LBRC membrane to be targeted around migrating leukocytes. Trans-homophilic interaction may play a role in endothelial cell-cell adhesion via cell junctions. Heterophilic interaction with CD177 plays a role in transendothelial migration of neutrophils. Homophilic ligation of PECAM1 prevents macrophage-mediated phagocytosis of neighboring viable leukocytes by transmitting a detachment signal. Promotes macrophage-mediated phagocytosis of apoptotic leukocytes by tethering them to the phagocytic cells; PECAM1-mediated detachment signal appears to be disabled in apoptotic leukocytes. Modulates bradykinin receptor BDKRB2 activation. Regulates bradykinin- and hyperosmotic shock-induced ERK1/2 activation in endothelial cells. Induces susceptibility to atherosclerosis. The polypeptide is Platelet endothelial cell adhesion molecule (PECAM1) (Sus scrofa (Pig)).